A 301-amino-acid polypeptide reads, in one-letter code: Probable alpha-L-glutamate ligase 2 (301 aa).

The ATP-grasp domain occupies L104–E287. ATP-binding positions include K141, E178–Y179, D187, and R211–N213. D248, E260, and N262 together coordinate Mg(2+). Residues D248, E260, and N262 each coordinate Mn(2+).

The protein belongs to the RimK family. Mg(2+) is required as a cofactor. Mn(2+) serves as cofactor.

This Shewanella amazonensis (strain ATCC BAA-1098 / SB2B) protein is Probable alpha-L-glutamate ligase 2.